A 463-amino-acid polypeptide reads, in one-letter code: Glutathione amide reductase (463 aa).

3 residues coordinate Ni(2+): Thr-2, Gln-3, and His-4. FAD is bound by residues 14-15 (SG), Glu-34, and Thr-41. Cys-42 and Cys-47 form a disulfide bridge. Residues Lys-50 and 113–114 (HA) contribute to the FAD site. NAD(+) is bound at residue Lys-50. Residues 174–180 (AGYIGIE), 197–198 (LE), Val-230, and Gly-261 each bind NAD(+). FAD is bound by residues Asp-302 and 308–310 (QLT). Gln-308 and Val-341 together coordinate NAD(+). Residue His-437 participates in FAD binding. Residue His-437 is the Proton acceptor of the active site.

The protein belongs to the class-I pyridine nucleotide-disulfide oxidoreductase family. As to quaternary structure, homodimer. The cofactor is FAD.

It carries out the reaction 2 glutathione amide + NAD(+) = glutathione amide disulfide + NADH + H(+). Catalyzes the reduction of glutathione amide disulfide (GASSAG) to restore glutathione amide (GASH) in the presence of NADH. May play a role in GASH metabolism under anaerobic conditions as a sulfide carrier necessary for cytoplasmic sulfide oxidation. The polypeptide is Glutathione amide reductase (Marichromatium gracile (Chromatium gracile)).